Here is a 126-residue protein sequence, read N- to C-terminus: Large ribosomal subunit protein bL17 (126 aa).

This sequence belongs to the bacterial ribosomal protein bL17 family. As to quaternary structure, part of the 50S ribosomal subunit. Contacts protein L32.

The protein is Large ribosomal subunit protein bL17 of Lysinibacillus sphaericus (strain C3-41).